We begin with the raw amino-acid sequence, 469 residues long: Putative F-box/LRR-repeat protein At5g02930 (469 aa).

In terms of domain architecture, F-box spans 27–77 (VDSISDLPDAVLQHIFSYIPTELAIRTSVLSKRWRHVWSETPHLSFEWLKV). 6 LRR repeats span residues 30–58 (ISDL…VLSK), 178–203 (DCTM…SLKF), 204–214 (CMSLKYLNLSK), 223–250 (IERI…RLRD), 296–321 (TMLK…SLSK), and 341–366 (IIRS…TVYT).

This chain is Putative F-box/LRR-repeat protein At5g02930, found in Arabidopsis thaliana (Mouse-ear cress).